A 413-amino-acid chain; its full sequence is Serine/threonine transporter SstT (413 aa).

The next 8 helical transmembrane spans lie at 19–39 (IFIG…LQNV), 61–81 (AVAP…KKIG), 89–109 (IIVL…IAGF), 148–168 (ALFK…GLAL), 189–209 (IVYV…SETL), 223–243 (LLAV…PILV), 297–317 (IPLG…ILTL), and 325–345 (IQIS…CACG).

Belongs to the dicarboxylate/amino acid:cation symporter (DAACS) (TC 2.A.23) family.

The protein localises to the cell inner membrane. The catalysed reaction is L-serine(in) + Na(+)(in) = L-serine(out) + Na(+)(out). The enzyme catalyses L-threonine(in) + Na(+)(in) = L-threonine(out) + Na(+)(out). Involved in the import of serine and threonine into the cell, with the concomitant import of sodium (symport system). The chain is Serine/threonine transporter SstT from Pasteurella multocida (strain Pm70).